The primary structure comprises 560 residues: Dimethylaniline monooxygenase [N-oxide-forming] 4 (560 aa).

Residues 9-13 (GAGVS), glutamate 32, and 40-41 (LW) contribute to the FAD site. NADP(+) contacts are provided by residues 60 to 61 (TN) and 195 to 198 (TGGD). The chain crosses the membrane as a helical span at residues 519-539 (APVLIVSLLLIYKSSLFLELV).

This sequence belongs to the FMO family. The cofactor is FAD. Detected in liver and kidney (at protein level).

The protein resides in the microsome membrane. It localises to the endoplasmic reticulum membrane. It catalyses the reaction N,N-dimethylaniline + NADPH + O2 + H(+) = N,N-dimethylaniline N-oxide + NADP(+) + H2O. Functionally, this protein is involved in the oxidative metabolism of a variety of xenobiotics such as drugs and pesticides. The polypeptide is Dimethylaniline monooxygenase [N-oxide-forming] 4 (Fmo4) (Rattus norvegicus (Rat)).